Reading from the N-terminus, the 226-residue chain is Aspartyl protease inhibitor (226 aa).

Residues 1–15 form the signal peptide; it reads MKLLFLCALIALTAA. Disordered regions lie at residues 95 to 116 and 196 to 218; these read GKKGKAVETSSEELPKAPKKPS and EAKQTTTTEAPELPEEAPEQPNV. Cys131 and Cys222 are disulfide-bonded.

This sequence belongs to the protease inhibitor I33 family.

It localises to the secreted. Aspartyl protease inhibitor. This is Aspartyl protease inhibitor from Parelaphostrongylus tenuis (Meningeal worm).